The chain runs to 97 residues: Aspartyl/glutamyl-tRNA(Asn/Gln) amidotransferase subunit C (97 aa).

Belongs to the GatC family. Heterotrimer of A, B and C subunits.

It catalyses the reaction L-glutamyl-tRNA(Gln) + L-glutamine + ATP + H2O = L-glutaminyl-tRNA(Gln) + L-glutamate + ADP + phosphate + H(+). It carries out the reaction L-aspartyl-tRNA(Asn) + L-glutamine + ATP + H2O = L-asparaginyl-tRNA(Asn) + L-glutamate + ADP + phosphate + 2 H(+). Functionally, allows the formation of correctly charged Asn-tRNA(Asn) or Gln-tRNA(Gln) through the transamidation of misacylated Asp-tRNA(Asn) or Glu-tRNA(Gln) in organisms which lack either or both of asparaginyl-tRNA or glutaminyl-tRNA synthetases. The reaction takes place in the presence of glutamine and ATP through an activated phospho-Asp-tRNA(Asn) or phospho-Glu-tRNA(Gln). This is Aspartyl/glutamyl-tRNA(Asn/Gln) amidotransferase subunit C from Picosynechococcus sp. (strain ATCC 27264 / PCC 7002 / PR-6) (Agmenellum quadruplicatum).